The sequence spans 213 residues: High frequency lysogenization protein HflD homolog (213 aa).

The stretch at 79–122 forms a coiled coil; sequence QGLNAELTRYTLSLMVLERKLSSAKGALNTLGDRINGLQRQLDH.

The protein belongs to the HflD family.

The protein resides in the cytoplasm. The protein localises to the cell inner membrane. This chain is High frequency lysogenization protein HflD homolog, found in Salmonella dublin (strain CT_02021853).